A 329-amino-acid chain; its full sequence is Thiamine thiazole synthase (329 aa).

Substrate contacts are provided by residues Cys-86, 107-108 (EA), Gly-115, and Val-180. Cys-218 carries the post-translational modification 2,3-didehydroalanine (Cys). Residues Asp-220, His-235, Met-287, and 297–299 (RMG) contribute to the substrate site.

It belongs to the THI4 family. As to quaternary structure, homooctamer. Fe cation is required as a cofactor. In terms of processing, during the catalytic reaction, a sulfide is transferred from Cys-218 to a reaction intermediate, generating a dehydroalanine residue.

It localises to the cytoplasm. Its subcellular location is the nucleus. The catalysed reaction is [ADP-thiazole synthase]-L-cysteine + glycine + NAD(+) = [ADP-thiazole synthase]-dehydroalanine + ADP-5-ethyl-4-methylthiazole-2-carboxylate + nicotinamide + 3 H2O + 2 H(+). Involved in biosynthesis of the thiamine precursor thiazole. Catalyzes the conversion of NAD and glycine to adenosine diphosphate 5-(2-hydroxyethyl)-4-methylthiazole-2-carboxylic acid (ADT), an adenylated thiazole intermediate. The reaction includes an iron-dependent sulfide transfer from a conserved cysteine residue of the protein to a thiazole intermediate. The enzyme can only undergo a single turnover, which suggests it is a suicide enzyme. May have additional roles in adaptation to various stress conditions and in DNA damage tolerance. The sequence is that of Thiamine thiazole synthase from Phaeosphaeria nodorum (strain SN15 / ATCC MYA-4574 / FGSC 10173) (Glume blotch fungus).